The primary structure comprises 800 residues: Putative antiporter subunit mnhA2 (800 aa).

Transmembrane regions (helical) follow at residues 3–23 (LVYL…TLFI), 29–49 (FAGY…LAQI), 78–98 (GLGL…FFYA), 109–129 (LPRF…IVVS), 133–153 (ILMY…ISYW), 167–187 (FIIT…LYII), 202–222 (SISE…GAFT), 249–269 (SATM…ILGL), 273–293 (YIYI…VTAL), 300–320 (GILA…VGLG), 337–357 (LILF…CALF), 387–407 (LVMT…GFLS), 428–448 (LTII…VYAV), 472–492 (PWLF…IFFI), 527–547 (GVNL…ILAL), 596–616 (IITV…VGLP), 627–647 (GPLE…LVFI), 651–671 (LTMV…FLLM), 676–696 (LALT…VSFS), 712–732 (TIKI…IFIA), and 768–788 (LDTM…YTLL).

This sequence belongs to the CPA3 antiporters (TC 2.A.63) subunit A family. In terms of assembly, may form a heterooligomeric complex that consists of seven subunits: mnhA2, mnhB2, mnhC2, mnhD2, mnhE2, mnhF2 and mnhG2.

It localises to the cell membrane. This chain is Putative antiporter subunit mnhA2 (mnhA2), found in Staphylococcus haemolyticus (strain JCSC1435).